Consider the following 144-residue polypeptide: Maximins z/Hv (144 aa).

Positions 1-18 are cleaved as a signal peptide; sequence MNFKYIVAVSFLIASGYA. Positions 19-43 are excised as a propeptide; that stretch reads RSEENDVQSLSQREVLEEESLREIR. Asparagine amide is present on N70. Positions 74–123 are excised as a propeptide; that stretch reads TAEDHEVMKRLKAVMRDLDSLDHPEEASERETRGFNQEEIANLFTKKEKR. I143 carries the isoleucine amide modification.

The protein belongs to the bombinin family. As to expression, expressed by the skin glands.

It is found in the secreted. Functionally, maximin-z shows antimicrobial activity against bacteria and against the fungus C.albicans. It has little hemolytic activity. Maximin-Hv shows antimicrobial activity against bacteria and against the fungus C.albicans. Shows strong hemolytic activity. The chain is Maximins z/Hv from Bombina maxima (Giant fire-bellied toad).